A 452-amino-acid polypeptide reads, in one-letter code: 23S rRNA (uracil(1939)-C(5))-methyltransferase RlmD (452 aa).

Residues 1-23 are disordered; that stretch reads MSRKKSNGGLRFQPAGGNRATQI. One can recognise a TRAM domain in the interval 22–80; it reads QIPVGKKQRLLIERVAGDGRGIAFIEGRTWFVSGALGGEEVEARVLGARGKVVEARLER. The [4Fe-4S] cluster site is built by Cys-93, Cys-99, Cys-102, and Cys-181. Residues Gln-285, Phe-314, Asn-319, Glu-335, Asp-362, and Asp-383 each contribute to the S-adenosyl-L-methionine site. The Nucleophile role is filled by Cys-409.

The protein belongs to the class I-like SAM-binding methyltransferase superfamily. RNA M5U methyltransferase family. RlmD subfamily.

It carries out the reaction uridine(1939) in 23S rRNA + S-adenosyl-L-methionine = 5-methyluridine(1939) in 23S rRNA + S-adenosyl-L-homocysteine + H(+). Catalyzes the formation of 5-methyl-uridine at position 1939 (m5U1939) in 23S rRNA. This chain is 23S rRNA (uracil(1939)-C(5))-methyltransferase RlmD, found in Pseudomonas entomophila (strain L48).